Reading from the N-terminus, the 471-residue chain is Ribulose bisphosphate carboxylase large chain (471 aa).

The substrate site is built by Asn-115 and Thr-165. The active-site Proton acceptor is Lys-167. Residue Lys-169 participates in substrate binding. Lys-193, Asp-195, and Glu-196 together coordinate Mg(2+). An N6-carboxylysine modification is found at Lys-193. The active-site Proton acceptor is the His-286. 3 residues coordinate substrate: Arg-287, His-319, and Ser-371.

Belongs to the RuBisCO large chain family. Type I subfamily. As to quaternary structure, heterohexadecamer of 8 large chains and 8 small chains. It depends on Mg(2+) as a cofactor.

Its subcellular location is the carboxysome. The catalysed reaction is 2 (2R)-3-phosphoglycerate + 2 H(+) = D-ribulose 1,5-bisphosphate + CO2 + H2O. The enzyme catalyses D-ribulose 1,5-bisphosphate + O2 = 2-phosphoglycolate + (2R)-3-phosphoglycerate + 2 H(+). RuBisCO catalyzes two reactions: the carboxylation of D-ribulose 1,5-bisphosphate, the primary event in carbon dioxide fixation, as well as the oxidative fragmentation of the pentose substrate in the photorespiration process. Both reactions occur simultaneously and in competition at the same active site. This Synechococcus sp. (strain CC9605) protein is Ribulose bisphosphate carboxylase large chain.